A 314-amino-acid chain; its full sequence is Homoserine O-acetyltransferase (314 aa).

Residue Cys142 is the Acyl-thioester intermediate of the active site. Substrate is bound by residues Lys163 and Ser192. Residue His235 is the Proton acceptor of the active site. The active site involves Glu237. Arg249 contacts substrate.

This sequence belongs to the MetA family.

Its subcellular location is the cytoplasm. It carries out the reaction L-homoserine + acetyl-CoA = O-acetyl-L-homoserine + CoA. The protein operates within amino-acid biosynthesis; L-methionine biosynthesis via de novo pathway; O-acetyl-L-homoserine from L-homoserine: step 1/1. Functionally, transfers an acetyl group from acetyl-CoA to L-homoserine, forming acetyl-L-homoserine. The protein is Homoserine O-acetyltransferase of Streptococcus pneumoniae (strain JJA).